Here is a 343-residue protein sequence, read N- to C-terminus: Heat-inducible transcription repressor HrcA (343 aa).

This sequence belongs to the HrcA family.

In terms of biological role, negative regulator of class I heat shock genes (grpE-dnaK-dnaJ and groELS operons). Prevents heat-shock induction of these operons. This chain is Heat-inducible transcription repressor HrcA, found in Bacillus subtilis (strain 168).